The sequence spans 500 residues: Glycerol kinase (500 aa).

Threonine 11 lines the ADP pocket. Positions 11, 12, and 13 each coordinate ATP. Threonine 11 serves as a coordination point for sn-glycerol 3-phosphate. Arginine 15 serves as a coordination point for ADP. Residues arginine 81, glutamate 82, tyrosine 133, and aspartate 242 each contribute to the sn-glycerol 3-phosphate site. Glycerol is bound by residues arginine 81, glutamate 82, tyrosine 133, aspartate 242, and glutamine 243. Residues threonine 264 and glycine 307 each coordinate ADP. Threonine 264, glycine 307, glutamine 311, and glycine 411 together coordinate ATP. Glycine 411 is an ADP binding site.

The protein belongs to the FGGY kinase family.

It carries out the reaction glycerol + ATP = sn-glycerol 3-phosphate + ADP + H(+). It functions in the pathway polyol metabolism; glycerol degradation via glycerol kinase pathway; sn-glycerol 3-phosphate from glycerol: step 1/1. Its activity is regulated as follows. Inhibited by fructose 1,6-bisphosphate (FBP). Its function is as follows. Key enzyme in the regulation of glycerol uptake and metabolism. Catalyzes the phosphorylation of glycerol to yield sn-glycerol 3-phosphate. The chain is Glycerol kinase from Bradyrhizobium diazoefficiens (strain JCM 10833 / BCRC 13528 / IAM 13628 / NBRC 14792 / USDA 110).